The sequence spans 603 residues: MSRFARLLLIVALFFTNAWAKTVKETLRITWKEGAPNGQARELIYTNGQFPSPTLVWDEDDDIEGQRPIQPGNKFVYRFKASPPGNHWYHSHEKMSLVDGLYGAIHIRLTGTPRRFHMNDAKSQARRPKGDRTGLWSQISQDKDDIKAMENAAYDPEYLVVSDWSQYTSEEYWKISTDSGLLVLYAYVAPSILVNGKGEVYCPGQKFLQAELAPGLVEDAFPPGTEVSDKGCFPADLDQVQGGPWNITKRPDLIPPRVREGCVASRHENATIVVDPSKNNGWVSMHFVAAATTAQITFSVDSHEFWLYEIDGNYVNPRKFASAVMSAGETFSVMIKLDQEPGKYTMRIPNSGASQVLGGFAEMVYKGCEREEKAGKAYLSYGGNPTSPDVEKNSFFPWQLDTDHMSPWPPNKPRPGNADEEHLLVLGRVGAPYNYTMNTKYLYPVDFQNDDPLLFYPSATRDTENDGLVLRTKNGSWVDLILQVSTLPGDTASSEHFMHKHGSKTWRIGFGTGVWNYTSVEEAIQERPQDFNLETPGLRDTWITAFSIGGEAYWSVFRYFVDNPGPWLFHCHIELHLMGGMGIAILDGVDAWPEHIPEEYQLR.

An N-terminal signal peptide occupies residues 1 to 20; the sequence is MSRFARLLLIVALFFTNAWA. Plastocyanin-like domains follow at residues 66 to 108 and 159 to 349; these read QRPI…IHIR and LVVS…MRIP. Positions 90 and 92 each coordinate Cu cation. N-linked (GlcNAc...) asparagine glycosylation is found at asparagine 246, asparagine 269, asparagine 434, and asparagine 474. The 129-residue stretch at 460–588 folds into the Plastocyanin-like 3 domain; it reads TRDTENDGLV…GGMGIAILDG (129 aa). Cu cation is bound by residues histidine 496, histidine 499, and histidine 501. N-linked (GlcNAc...) asparagine glycosylation occurs at asparagine 516. Residues histidine 570, cysteine 571, histidine 572, and histidine 576 each contribute to the Cu cation site.

This sequence belongs to the multicopper oxidase family. Requires Cu cation as cofactor.

It localises to the cell surface. It functions in the pathway pigment biosynthesis. Laccase; part of the Pks1 gene cluster that mediates the biosynthesis of an anthraquinone derivative pigment that contributes to conidial pigmentation that provides protection from UV radiation, heat and cold stress. The polyketide synthase Pks1 produces 1-acetyl-2,4,6,8-tetrahydroxy-9,10-anthraquinone though condensation of acetyl-CoA with malonyl-CoA. The dehydratase EthD and the laccase Mlac1 further convert the anthraquinone derivative into the final conidial pigment. The chain is Laccase 1 from Metarhizium anisopliae (Entomophthora anisopliae).